The sequence spans 476 residues: Aspartyl/glutamyl-tRNA(Asn/Gln) amidotransferase subunit B (476 aa).

The protein belongs to the GatB/GatE family. GatB subfamily. As to quaternary structure, heterotrimer of A, B and C subunits.

It catalyses the reaction L-glutamyl-tRNA(Gln) + L-glutamine + ATP + H2O = L-glutaminyl-tRNA(Gln) + L-glutamate + ADP + phosphate + H(+). It carries out the reaction L-aspartyl-tRNA(Asn) + L-glutamine + ATP + H2O = L-asparaginyl-tRNA(Asn) + L-glutamate + ADP + phosphate + 2 H(+). Functionally, allows the formation of correctly charged Asn-tRNA(Asn) or Gln-tRNA(Gln) through the transamidation of misacylated Asp-tRNA(Asn) or Glu-tRNA(Gln) in organisms which lack either or both of asparaginyl-tRNA or glutaminyl-tRNA synthetases. The reaction takes place in the presence of glutamine and ATP through an activated phospho-Asp-tRNA(Asn) or phospho-Glu-tRNA(Gln). This Latilactobacillus sakei subsp. sakei (strain 23K) (Lactobacillus sakei subsp. sakei) protein is Aspartyl/glutamyl-tRNA(Asn/Gln) amidotransferase subunit B.